The sequence spans 929 residues: Bifunctional uridylyltransferase/uridylyl-removing enzyme (929 aa).

The segment at 1–379 is uridylyltransferase; the sequence is MSPSRPAADE…RPAAKRRRVP (379 aa). A uridylyl-removing region spans residues 380 to 735; that stretch reads ESDDFVIDNN…VGFDEARAVT (356 aa). The HD domain occupies 495–618; sequence VDEHLIRCVG…VETVEQMKML (124 aa). 2 consecutive ACT domains span residues 736–818 and 849–929; these read ELTI…AVAR and VIEV…KPAA.

It belongs to the GlnD family. It depends on Mg(2+) as a cofactor.

The catalysed reaction is [protein-PII]-L-tyrosine + UTP = [protein-PII]-uridylyl-L-tyrosine + diphosphate. It catalyses the reaction [protein-PII]-uridylyl-L-tyrosine + H2O = [protein-PII]-L-tyrosine + UMP + H(+). With respect to regulation, uridylyltransferase (UTase) activity is inhibited by glutamine, while glutamine activates uridylyl-removing (UR) activity. Its function is as follows. Modifies, by uridylylation and deuridylylation, the PII regulatory proteins (GlnB and homologs), in response to the nitrogen status of the cell that GlnD senses through the glutamine level. Under low glutamine levels, catalyzes the conversion of the PII proteins and UTP to PII-UMP and PPi, while under higher glutamine levels, GlnD hydrolyzes PII-UMP to PII and UMP (deuridylylation). Thus, controls uridylylation state and activity of the PII proteins, and plays an important role in the regulation of nitrogen fixation and metabolism. In Rhodopseudomonas palustris (strain ATCC BAA-98 / CGA009), this protein is Bifunctional uridylyltransferase/uridylyl-removing enzyme.